We begin with the raw amino-acid sequence, 310 residues long: Upstream stimulatory factor 1 (310 aa).

Over residues 1–17 (MKGQQKTAETEEGTVQI) the composition is skewed to polar residues. Disordered stretches follow at residues 1–26 (MKGQ…ATGE) and 171–209 (QGGS…EVER). The span at 190–209 (EAPRTTRDEKRRAQHNEVER) shows a compositional bias: basic and acidic residues. Positions 199 to 254 (KRRAQHNEVERRRRDKINNWIVQLSKIIPDCSMESTKSGQSKGGILSKACDYIQEL) constitute a bHLH domain. Residues 271-292 (LQLDNDVLRQQVEDLKNKNLLL) form a leucine-zipper region. K306 is covalently cross-linked (Glycyl lysine isopeptide (Lys-Gly) (interchain with G-Cter in SUMO2)).

Efficient DNA binding requires dimerization with another bHLH protein. Binds DNA as a homodimer or a heterodimer (USF1/USF2). Interacts with varicella-zoster virus IE62 protein.

The protein localises to the nucleus. Its function is as follows. Transcription factor that binds to a symmetrical DNA sequence (E-boxes) (5'-CACGTG-3') that is found in a variety of viral and cellular promoters. This Homo sapiens (Human) protein is Upstream stimulatory factor 1 (USF1).